Consider the following 185-residue polypeptide: Alkyl hydroperoxide reductase AhpD (185 aa).

The active-site Proton donor is cysteine 131. The cysteines at positions 131 and 134 are disulfide-linked. Cysteine 134 (cysteine sulfenic acid (-SOH) intermediate) is an active-site residue.

The protein belongs to the AhpD family. As to quaternary structure, homotrimer.

The catalysed reaction is N(6)-[(R)-dihydrolipoyl]-L-lysyl-[lipoyl-carrier protein] + a hydroperoxide = N(6)-[(R)-lipoyl]-L-lysyl-[lipoyl-carrier protein] + an alcohol + H2O. In terms of biological role, antioxidant protein with alkyl hydroperoxidase activity. Required for the reduction of the AhpC active site cysteine residues and for the regeneration of the AhpC enzyme activity. This Frankia alni (strain DSM 45986 / CECT 9034 / ACN14a) protein is Alkyl hydroperoxide reductase AhpD.